We begin with the raw amino-acid sequence, 404 residues long: Multidrug resistance protein MdtG (404 aa).

Helical transmembrane passes span 19–39 (LGCFLTGAAFSLVMPFLPLYV), 56–76 (LVFSITFLFSAIASPFWGGLA), 90–110 (LGMAIVMLLMGMAQNIWQFLI), 113–133 (ALLGLLGGFIPNANALIATQV), 149–169 (GVSGALLGPLAGGLLAGHYGL), 171–191 (PVFFITASVLFICFLLTFFFI), 222–242 (LFVTTLIIQVATGSIAPILTL), 254–274 (IAFISGMIASVPGVAALLSAP), 288–308 (ILIVALIISVLLLIPMSFVQT), 317–337 (FLLGAADGALLPAVQTLLVYN), and 376–396 (AVFCVTAGVVLFNAIYSWNSL).

The protein belongs to the major facilitator superfamily. DHA1 family. MdtG (TC 2.A.1.2.20) subfamily.

The protein resides in the cell inner membrane. This is Multidrug resistance protein MdtG from Salmonella paratyphi C (strain RKS4594).